A 360-amino-acid chain; its full sequence is Mannonate dehydratase (360 aa).

The protein belongs to the mannonate dehydratase family. Fe(2+) is required as a cofactor. The cofactor is Mn(2+).

The catalysed reaction is D-mannonate = 2-dehydro-3-deoxy-D-gluconate + H2O. It participates in carbohydrate metabolism; pentose and glucuronate interconversion. Its function is as follows. Catalyzes the dehydration of D-mannonate. In Thermotoga maritima (strain ATCC 43589 / DSM 3109 / JCM 10099 / NBRC 100826 / MSB8), this protein is Mannonate dehydratase (uxuA).